The following is a 323-amino-acid chain: Acetyl esterase (323 aa).

The Involved in the stabilization of the negatively charged intermediate by the formation of the oxyanion hole motif lies at 91-93; the sequence is HGG. Catalysis depends on residues Ser-165, Asp-262, and His-292.

This sequence belongs to the 'GDXG' lipolytic enzyme family. As to quaternary structure, homodimer. Interacts with MalT and MelA.

It localises to the cytoplasm. Functionally, displays esterase activity towards short chain fatty esters (acyl chain length of up to 8 carbons). Able to hydrolyze triacetylglycerol (triacetin) and tributyrylglycerol (tributyrin), but not trioleylglycerol (triolein) or cholesterol oleate. Negatively regulates MalT activity by antagonizing maltotriose binding. Inhibits MelA galactosidase activity. The sequence is that of Acetyl esterase from Salmonella paratyphi A (strain ATCC 9150 / SARB42).